Here is a 411-residue protein sequence, read N- to C-terminus: Thyroxine-binding globulin (411 aa).

An N-terminal signal peptide occupies residues 1 to 15; it reads MPLFSLVLLILGLHC. Residues asparagine 34, asparagine 97, asparagine 163, and asparagine 251 are each glycosylated (N-linked (GlcNAc...) asparagine). The thyroxine site is built by asparagine 291 and lysine 394.

The protein belongs to the serpin family. Expressed by the liver and secreted in plasma.

It is found in the secreted. Functionally, major thyroid hormone transport protein in serum. This Bos taurus (Bovine) protein is Thyroxine-binding globulin (SERPINA7).